We begin with the raw amino-acid sequence, 857 residues long: Phosphoenolpyruvate carboxylase (857 aa).

Catalysis depends on residues His144 and Lys530.

This sequence belongs to the PEPCase type 1 family. As to quaternary structure, homotetramer. The cofactor is Mg(2+). The N-terminus is blocked.

It catalyses the reaction oxaloacetate + phosphate = phosphoenolpyruvate + hydrogencarbonate. Functionally, forms oxaloacetate, a four-carbon dicarboxylic acid source for the tricarboxylic acid cycle. This chain is Phosphoenolpyruvate carboxylase (ppc), found in Thermus sp. (strain 71).